The sequence spans 552 residues: Probable protein kinase UbiB (552 aa).

In terms of domain architecture, Protein kinase spans 121–504; sequence HFDTVPLASA…QGLQRRVVNA (384 aa). ATP contacts are provided by residues 127 to 135 and lysine 149; that span reads LASASISQV. Aspartate 284 acts as the Proton acceptor in catalysis. 2 helical membrane passes run 501 to 521 and 526 to 546; these read VVNA…YGLH and YLGA…LALF.

The protein belongs to the ABC1 family. UbiB subfamily.

It localises to the cell inner membrane. Its pathway is cofactor biosynthesis; ubiquinone biosynthesis [regulation]. Its function is as follows. Is probably a protein kinase regulator of UbiI activity which is involved in aerobic coenzyme Q (ubiquinone) biosynthesis. The sequence is that of Probable protein kinase UbiB from Xylella fastidiosa (strain 9a5c).